We begin with the raw amino-acid sequence, 440 residues long: Sorting nexin-31 (440 aa).

The PX domain maps to M1 to T109.

Belongs to the sorting nexin family. As to quaternary structure, interacts with CCDC22, CCDC93, VPS26C and VPS35L, associates with the retriever and CCC complexes.

May be involved in protein trafficking. The chain is Sorting nexin-31 (SNX31) from Homo sapiens (Human).